A 1788-amino-acid polypeptide reads, in one-letter code: Genome polyprotein (1788 aa).

Positions 1-184 (MMMASKDVVA…LCPLPPIDLR (184 aa)) are interaction with host MAP1LC3A/LC3. The span at 58–68 (GRTTPEPTGTA) shows a compositional bias: low complexity. The tract at residues 58 to 86 (GRTTPEPTGTAGPPPKQQRDRPPRTQEEV) is disordered. Basic and acidic residues predominate over residues 74–84 (QQRDRPPRTQE). Positions 185-399 (NMEPASEPTI…ASLLPDFHLQ (215 aa)) are interaction with NTPase. The segment at 302–399 (HPTQSWSQQT…ASLLPDFHLQ (98 aa)) is interaction with NS4. Host ER membrane association stretches follow at residues 319 to 350 (KLEL…KPLN) and 361 to 399 (TFMG…FHLQ). The interaction with NS1-2 and NS4 and homooligomerization stretch occupies residues 400-575 (GPEDLARDLV…GKTKAAEHLA (176 aa)). Residues 533-698 (RISMARSALA…EQIRRVSPGD (166 aa)) form the SF3 helicase domain. 561-568 (GPPGIGKT) lines the ATP pocket. The interval 652-757 (AIVITTNAPG…AVALTMERQD (106 aa)) is important for mitochondrion targeting. Residues 827–833 (YSLESDG) are functions as endoplasmic reticulum export signal. Residues 866–911 (RAVAYASCIQSAITSILQIAGSALVVNRAVKRMFGTRTATLSLEGP) form a host membrane association region. The segment at 948–979 (EEVAHTEIPSATMEGKNKGKNKKGRGRRNNYN) is disordered. A compositionally biased stretch (basic residues) spans 965–975 (KGKNKKGRGRR). Residues 988–993 (DEEYEE) form an acidic region. An O-(5'-phospho-RNA)-tyrosine modification is found at Tyr-991. An interaction with host EIF4G region spans residues 1083–1099 (WADDEREVDYNEKISFE). The Peptidase C37 domain maps to 1100–1280 (APPTLWSRVT…QASEGETTLE (181 aa)). Residues His-1129, Glu-1153, and Cys-1238 each act as for 3CLpro activity in the active site. Residues 1515-1636 (KYHFDADYTA…STDIEFDPAK (122 aa)) enclose the RdRp catalytic domain. Mg(2+) contacts are provided by Asp-1519, Asp-1521, Asp-1623, and Glu-1624.

In terms of assembly, homodimer. Homooligomer. Interacts with NTPase; this interaction increases the proapoptotic activity of the NTPase and is crucial for the formation of the viral replication complex. Interacts with NS4; this interaction is crucial for the formation of the viral replication complex. Interacts (via N-terminus) with host VAPA. Interacts with host MAP1LC3A/LC3; this interaction does not seem to be linked to host autophagy, but rather plays a role in the formation of viral factories. As to quaternary structure, homooligomer. Interacts with NS1-2; this interaction increases the proapoptotic activity of the NTPase and is crucial for the formation of the viral replication complex. Interacts with NS4; this interaction increases the proapoptotic activity of the NTPase. Homodimer. Monomer; in solution. In terms of assembly, interacts with NTPase; this interaction increases the proapoptotic activity of the NTPase. Interacts with NS1-2; this interaction is crucial for the formation of the viral replication complex. As to quaternary structure, monomer. Interacts with the RNA-directed RNA polymerase; this interaction induces the multimerization of the RdRp and enhances its activity. Interacts with host IEF4G1; this interaction plays a role in translation of viral proteins. Homohexamer; also forms fibrous hexameric oligomer. Interacts with the viral genome-linked protein; this interaction induces the multimerization of the RdRp and enhances its activity. The cofactor is Mg(2+). Mn(2+) is required as a cofactor. Post-translationally, specific enzymatic cleavages in vivo yield mature proteins. 3CLpro is first autocatalytically cleaved, then processes the whole polyprotein. NS1/2-3 and NS3-4 sites are cleaved rapidly and NS4-5, NS5-6, and NS6-7 sites are processed subsequently and less efficiently. VPg is uridylylated by the polymerase and is covalently attached to the 5'-end of the polyadenylated genomic and subgenomic RNAs. This uridylylated form acts as a nucleotide-peptide primer for the polymerase.

The protein localises to the host Golgi apparatus membrane. It is found in the host endoplasmic reticulum membrane. The catalysed reaction is a ribonucleoside 5'-triphosphate + H2O = a ribonucleoside 5'-diphosphate + phosphate + H(+). It carries out the reaction Endopeptidase with a preference for cleavage when the P1 position is occupied by Glu-|-Xaa and the P1' position is occupied by Gly-|-Yaa.. The enzyme catalyses RNA(n) + a ribonucleoside 5'-triphosphate = RNA(n+1) + diphosphate. Its function is as follows. Induces the proliferation of the host smooth ER membranes forming long tubular structures. These remodeled membranes probably form the viral factories that contain the replication complex. May play a role in viral replication by interacting with host VAPA, a vesicle-associated membrane protein that plays a role in SNARE-mediated vesicle fusion. This interaction may target replication complex to intracellular membranes. Displays NTPase activity, but no helicase activity. Induces the formation of convoluted membranes derived from the host ER. These remodeled membranes probably form the viral factories that contain the replication complex. Initiates host cell death by targeting the mitochondrial outer membrane, leading to the permeabilization of mitochondria, programmed host cell death and viral egress. Probably plays a role in preventing the assembly of host stress granules. In terms of biological role, probable key protein responsible for the formation of membrane alterations by the virus. Induces the formation of convoluted membranes derived from the host ER. These remodeled membranes probably form the viral factories that contain the replication complex. May play a role in targeting replication complex to intracellular membranes. Functionally, viral genome-linked protein is covalently linked to the 5'-end of the positive-strand, negative-strand genomic RNAs and subgenomic RNA. Acts as a genome-linked replication primer. May recruit ribosome to viral RNA thereby promoting viral proteins translation. Interacts with host translation initiation complex to allow the translation of viral proteins. Induces the formation of aggregates of RNA-directed RNA polymerase in the presence of RNA. Through its interaction with the viral RNA-directed RNA polymerase, plays a crucial role in enhancing the polymerase activity. Its function is as follows. Processes the polyprotein. 3CLpro-RdRp is first released by autocleavage, then all other proteins are cleaved. May cleave polyadenylate-binding protein thereby inhibiting cellular translation. Replicates genomic and antigenomic RNA by recognizing replications specific signals. Also transcribes a subgenomic mRNA by initiating RNA synthesis internally on antigenomic RNA. This sgRNA codes for structural proteins. Catalyzes the covalent attachment VPg with viral RNAs. This Southampton virus (strain GI/Human/United Kingdom/Southampton/1991) (SHV) protein is Genome polyprotein.